The chain runs to 345 residues: Phosphate acyltransferase (345 aa).

This sequence belongs to the PlsX family. Homodimer. Probably interacts with PlsY.

The protein localises to the cytoplasm. It carries out the reaction a fatty acyl-[ACP] + phosphate = an acyl phosphate + holo-[ACP]. It participates in lipid metabolism; phospholipid metabolism. Functionally, catalyzes the reversible formation of acyl-phosphate (acyl-PO(4)) from acyl-[acyl-carrier-protein] (acyl-ACP). This enzyme utilizes acyl-ACP as fatty acyl donor, but not acyl-CoA. The polypeptide is Phosphate acyltransferase (Limosilactobacillus fermentum (strain NBRC 3956 / LMG 18251) (Lactobacillus fermentum)).